Here is a 340-residue protein sequence, read N- to C-terminus: Ketol-acid reductoisomerase (NADP(+)) (340 aa).

Residues 1-182 (MRVYYDRDCD…GGGRSGIIET (182 aa)) enclose the KARI N-terminal Rossmann domain. NADP(+) contacts are provided by residues 24–27 (YGSQ), arginine 48, serine 51, serine 53, and 83–86 (DELQ). The active site involves histidine 108. Glycine 134 serves as a coordination point for NADP(+). Residues 183 to 329 (NFREECETDL…AKLREMMPWI (147 aa)) form the KARI C-terminal knotted domain. Residues aspartate 191, glutamate 195, glutamate 227, and glutamate 231 each contribute to the Mg(2+) site. Substrate is bound at residue serine 252.

The protein belongs to the ketol-acid reductoisomerase family. Mg(2+) is required as a cofactor.

The enzyme catalyses (2R)-2,3-dihydroxy-3-methylbutanoate + NADP(+) = (2S)-2-acetolactate + NADPH + H(+). It catalyses the reaction (2R,3R)-2,3-dihydroxy-3-methylpentanoate + NADP(+) = (S)-2-ethyl-2-hydroxy-3-oxobutanoate + NADPH + H(+). It functions in the pathway amino-acid biosynthesis; L-isoleucine biosynthesis; L-isoleucine from 2-oxobutanoate: step 2/4. Its pathway is amino-acid biosynthesis; L-valine biosynthesis; L-valine from pyruvate: step 2/4. Functionally, involved in the biosynthesis of branched-chain amino acids (BCAA). Catalyzes an alkyl-migration followed by a ketol-acid reduction of (S)-2-acetolactate (S2AL) to yield (R)-2,3-dihydroxy-isovalerate. In the isomerase reaction, S2AL is rearranged via a Mg-dependent methyl migration to produce 3-hydroxy-3-methyl-2-ketobutyrate (HMKB). In the reductase reaction, this 2-ketoacid undergoes a metal-dependent reduction by NADPH to yield (R)-2,3-dihydroxy-isovalerate. In Ruegeria sp. (strain TM1040) (Silicibacter sp.), this protein is Ketol-acid reductoisomerase (NADP(+)).